A 572-amino-acid chain; its full sequence is Dihydroxy-acid dehydratase (572 aa).

Residue C54 participates in [2Fe-2S] cluster binding. A Mg(2+)-binding site is contributed by D86. C127 contacts [2Fe-2S] cluster. Positions 128 and 129 each coordinate Mg(2+). At K129 the chain carries N6-carboxylysine. C199 is a binding site for [2Fe-2S] cluster. Position 449 (E449) interacts with Mg(2+). S475 (proton acceptor) is an active-site residue.

This sequence belongs to the IlvD/Edd family. Homodimer. [2Fe-2S] cluster serves as cofactor. The cofactor is Mg(2+).

The catalysed reaction is (2R)-2,3-dihydroxy-3-methylbutanoate = 3-methyl-2-oxobutanoate + H2O. The enzyme catalyses (2R,3R)-2,3-dihydroxy-3-methylpentanoate = (S)-3-methyl-2-oxopentanoate + H2O. Its pathway is amino-acid biosynthesis; L-isoleucine biosynthesis; L-isoleucine from 2-oxobutanoate: step 3/4. It functions in the pathway amino-acid biosynthesis; L-valine biosynthesis; L-valine from pyruvate: step 3/4. In terms of biological role, functions in the biosynthesis of branched-chain amino acids. Catalyzes the dehydration of (2R,3R)-2,3-dihydroxy-3-methylpentanoate (2,3-dihydroxy-3-methylvalerate) into 2-oxo-3-methylpentanoate (2-oxo-3-methylvalerate) and of (2R)-2,3-dihydroxy-3-methylbutanoate (2,3-dihydroxyisovalerate) into 2-oxo-3-methylbutanoate (2-oxoisovalerate), the penultimate precursor to L-isoleucine and L-valine, respectively. The sequence is that of Dihydroxy-acid dehydratase from Pelagibacter ubique (strain HTCC1062).